The chain runs to 441 residues: Xylose isomerase (441 aa).

Residues His-105 and Asp-108 contribute to the active site. Residues Glu-236, Glu-272, His-275, Asp-300, Asp-311, Asp-313, and Asp-343 each contribute to the Mg(2+) site.

Belongs to the xylose isomerase family. Homotetramer. The cofactor is Mg(2+).

Its subcellular location is the cytoplasm. It catalyses the reaction alpha-D-xylose = alpha-D-xylulofuranose. The polypeptide is Xylose isomerase (Mesorhizobium japonicum (strain LMG 29417 / CECT 9101 / MAFF 303099) (Mesorhizobium loti (strain MAFF 303099))).